Consider the following 845-residue polypeptide: Prickle-like protein 2 (845 aa).

The 109-residue stretch at 18–126 (FDFQRSSTSD…NVRPFPVTMT (109 aa)) folds into the PET domain. Ser92 carries the post-translational modification Phosphoserine. 3 LIM zinc-binding domains span residues 128-193 (AICE…CLKP), 193-253 (PRCA…LYAE), and 253-317 (EYCD…EDPN). 2 disordered regions span residues 314–346 (EDPN…NKGK) and 483–546 (YSDM…GSME). Residues 318–327 (GSDSSDSAFQ) are compositionally biased toward polar residues. A phosphoserine mark is found at Ser319, Ser321, and Ser322. Phosphothreonine occurs at positions 535, 537, and 540. Ser544 and Ser547 each carry phosphoserine. Positions 558–581 (AEGGAKRQEHLSRFSMPDLSKDSG) are disordered. Phosphoserine occurs at positions 608 and 643. Residues 642-700 (QSFDFDGGIASSKLPGQEGVHIQPMSERTRRRTTSRDDNRRFRPHRSRRSRRSRSDNAL) are disordered. Over residues 683–693 (FRPHRSRRSRR) the composition is skewed to basic residues. Ser732 bears the Phosphoserine mark. The disordered stretch occupies residues 823–845 (STLGGRGQLHSRKRQKSKNCIIS). Residue Cys842 is modified to Cysteine methyl ester. Cys842 carries S-farnesyl cysteine lipidation. The propeptide at 843–845 (IIS) is removed in mature form.

The protein belongs to the prickle / espinas / testin family. As to expression, expressed in the hippocampus and cerebral cortex.

The protein resides in the nucleus membrane. This is Prickle-like protein 2 (Prickle2) from Mus musculus (Mouse).